We begin with the raw amino-acid sequence, 92 residues long: Secreted RxLR effector protein 21 (92 aa).

A signal peptide spans 1–21; that stretch reads MNLSTLLLTLACISQLHGGSA. The short motif at 30–33 is the RxLR element; the sequence is RQLR.

It belongs to the RxLR effector family.

Its subcellular location is the secreted. It is found in the host nucleus. It localises to the host cytoplasm. In terms of biological role, secreted effector that completely suppresses the host cell death induced by cell death-inducing proteins. In Plasmopara viticola (Downy mildew of grapevine), this protein is Secreted RxLR effector protein 21.